Reading from the N-terminus, the 670-residue chain is Cyclic di-GMP phosphodiesterase PdeA (670 aa).

One can recognise an EAL domain in the interval 428 to 670 (QNKIFQYILK…GFLWHKPEPI (243 aa)).

It carries out the reaction 3',3'-c-di-GMP + H2O = 5'-phosphoguanylyl(3'-&gt;5')guanosine + H(+). In terms of biological role, phosphodiesterase (PDE) that catalyzes the hydrolysis of cyclic diguanylate (c-di-GMP) to pGpG. The protein is Cyclic di-GMP phosphodiesterase PdeA of Borreliella burgdorferi (strain ATCC 35210 / DSM 4680 / CIP 102532 / B31) (Borrelia burgdorferi).